Here is a 57-residue protein sequence, read N- to C-terminus: uncharacterized protein (57 aa).

The helical transmembrane segment at 34 to 54 (AALLDAAALVVIPGLLTAAAV) threads the bilayer.

It localises to the membrane. This is an uncharacterized protein from Dictyostelium discoideum (Social amoeba).